The chain runs to 132 residues: ER membrane protein complex subunit 5 (132 aa).

At 1 to 3 (MAS) the chain is on the cytoplasmic side. The helical transmembrane segment at 4–22 (SIWKGLVGIGLFALAHAAF) threads the bilayer. The Lumenal portion of the chain corresponds to 23 to 43 (SAAQHRSYMRLTEKEDETLPI). A helical transmembrane segment spans residues 44–63 (DIVLQTLLAFIVACYGIVHI). Over 64-132 (AGEFKDMDAT…KLSKLESMHR (69 aa)) the chain is Cytoplasmic.

Belongs to the membrane magnesium transporter (TC 1.A.67) family. In terms of assembly, component of the ER membrane protein complex (EMC).

Its subcellular location is the endoplasmic reticulum membrane. It localises to the golgi apparatus membrane. The protein localises to the early endosome membrane. In terms of biological role, part of the endoplasmic reticulum membrane protein complex (EMC) that enables the energy-independent insertion into endoplasmic reticulum membranes of newly synthesized membrane proteins. Preferentially accommodates proteins with transmembrane domains that are weakly hydrophobic or contain destabilizing features such as charged and aromatic residues. Involved in the cotranslational insertion of multi-pass membrane proteins in which stop-transfer membrane-anchor sequences become ER membrane spanning helices. It is also required for the post-translational insertion of tail-anchored/TA proteins in endoplasmic reticulum membranes. By mediating the proper cotranslational insertion of N-terminal transmembrane domains in an N-exo topology, with translocated N-terminus in the lumen of the ER, controls the topology of multi-pass membrane proteins like the G protein-coupled receptors. By regulating the insertion of various proteins in membranes, it is indirectly involved in many cellular processes. May be involved in Mg(2+) transport. This chain is ER membrane protein complex subunit 5, found in Xenopus tropicalis (Western clawed frog).